The chain runs to 79 residues: Conotoxin Tr6.3 (79 aa).

A signal peptide spans 1–22 (MKLTCVLIISVLFLTASQLITA). The propeptide occupies 23–47 (VYSRDKQQYRAARLRDEMRNLKGAR). Intrachain disulfides connect cysteine 49–cysteine 62, cysteine 56–cysteine 67, and cysteine 61–cysteine 77. Residues proline 60 and proline 63 each carry the 4-hydroxyproline modification.

The protein belongs to the conotoxin O1 superfamily. Expressed by the venom duct.

It localises to the secreted. Its function is as follows. Ion channel inhibitor that inhibits the increase in intracellular calcium upon depolarization in DRG neurons. In vivo, both intraperitoneal and intracranial injections into mice induce hyperactivity. This chain is Conotoxin Tr6.3, found in Conus terebra (Sea snail).